We begin with the raw amino-acid sequence, 176 residues long: Salivary antigen 1 (176 aa).

Residues 1–18 form the signal peptide; sequence MNYCFLVFLVYLVFAVNG.

It is found in the secreted. This Ctenocephalides felis (Cat flea) protein is Salivary antigen 1.